The primary structure comprises 491 residues: MAESGESPRLSDELGPVDYLMHRGEANPRTRSGIMALELLDGTPDWDRFRTRFENASRRVLRLRQKVVVPTLPTAAPRWVVDPDFNLDFHVRRVRVSGPATLREVLDLAEVILQSPLDISRPLWTATLVEGMADGRAAMLLHVSHAVTDGVGGVEMFAQIYDLERDPPPRSTPPQPIPEDLSPNDLMRRGINHLPIAVVGGVLDALSGAVSMAGRAVLEPVSTVSGILGYARSGIRVLNRAAEPSPLLRRRSLTTRTEAIDIRLADLHKAAKAGGGSINDAYLAGLCGALRRYHEALGVPISTLPMAVPVNLRAEGDAAGGNQFTGVNLAAPVGTIDPVARMKKIRAQMTQRRDEPAMNIIGSIAPVLSVLPTAVLEGITGSVIGSDVQASNVPVYPGDTYLAGAKILRQYGIGPLPGVAMMVVLISRGGWCTVTVRYDRASVRNDELFAQCLQAGFDEILALAGGPAPRVLPASFDTQGAGSVPRSVSGS.

The active-site Proton acceptor is histidine 145.

The protein belongs to the long-chain O-acyltransferase family.

It catalyses the reaction an acyl-CoA + a 1,2-diacyl-sn-glycerol = a triacyl-sn-glycerol + CoA. Its pathway is glycerolipid metabolism; triacylglycerol biosynthesis. In Mycobacterium tuberculosis (strain CDC 1551 / Oshkosh), this protein is Putative diacyglycerol O-acyltransferase MT2557.